The following is a 79-amino-acid chain: Cytochrome c oxidase subunit 7A1, mitochondrial (79 aa).

Residues Met1 to Arg21 constitute a mitochondrion transit peptide. At Phe22–Gly46 the chain is on the mitochondrial matrix side. Residues Ile47 to Ser75 traverse the membrane as a helical segment. Residues Phe76 to Asn79 are Mitochondrial intermembrane-facing.

The protein belongs to the cytochrome c oxidase VIIa family. As to quaternary structure, component of the complex IV (CIV, cytochrome c oxidase), a multisubunit enzyme composed of 14 subunits. The complex is composed of a catalytic core of 3 subunits MT-CO1, MT-CO2 and MT-CO3, encoded in the mitochondrial DNA, and 11 supernumerary subunits COX4I1 (or COX4I2), COX5A, COX5B, COX6A2 (or COX6A1), COX6B1 (or COX6B2), COX6C, COX7A1 (or COX7A2), COX7B, COX7C, COX8B and NDUFA4, which are encoded in the nuclear genome. The complex exists as a monomer or a dimer and forms supercomplexes (SCs) in the inner mitochondrial membrane with NADH-ubiquinone oxidoreductase (complex I, CI) and ubiquinol-cytochrome c oxidoreductase (cytochrome b-c1 complex, complex III, CIII), resulting in different assemblies (supercomplex SCI(1)III(2)IV(1) and megacomplex MCI(2)III(2)IV(2)).

Its subcellular location is the mitochondrion inner membrane. Its pathway is energy metabolism; oxidative phosphorylation. In terms of biological role, component of the mitochondrial respiratory complex IV (CIV, also named cytochrome c oxidase complex), the last enzyme in the mitochondrial electron transport chain which drives oxidative phosphorylation. The CIV complex is the component of the respiratory chain that catalyzes the reduction of oxygen to water. Acts as an assembly factor that specifically drives the homodimerization of CIV complexes, mediating the formation of mitochondrial respiratory supercomplexes (respirasomes) containing two CIV: supercomplxes with two molecules of CIV show improved activity. Despite being highly expressed in brown adipose tissue, not required for thermogenesis. This chain is Cytochrome c oxidase subunit 7A1, mitochondrial (COX7A1), found in Trachypithecus cristatus (Silvered leaf-monkey).